The following is a 102-amino-acid chain: Citrate lyase acyl carrier protein (102 aa).

S14 is subject to O-(phosphoribosyl dephospho-coenzyme A)serine.

This sequence belongs to the CitD family. As to quaternary structure, oligomer with a subunit composition of (alpha,beta,gamma)6.

It localises to the cytoplasm. Its function is as follows. Covalent carrier of the coenzyme of citrate lyase. This Streptococcus equi subsp. zooepidemicus (strain MGCS10565) protein is Citrate lyase acyl carrier protein.